The primary structure comprises 472 residues: 3-isopropylmalate dehydratase large subunit (472 aa).

The interval 289 to 312 is disordered; the sequence is TWGTNPAQGTGVSQVVPSPDDAKD. The span at 290-304 shows a compositional bias: polar residues; it reads WGTNPAQGTGVSQVV. [4Fe-4S] cluster-binding residues include C347, C407, and C410.

Belongs to the aconitase/IPM isomerase family. LeuC type 1 subfamily. Heterodimer of LeuC and LeuD. Requires [4Fe-4S] cluster as cofactor.

The catalysed reaction is (2R,3S)-3-isopropylmalate = (2S)-2-isopropylmalate. The protein operates within amino-acid biosynthesis; L-leucine biosynthesis; L-leucine from 3-methyl-2-oxobutanoate: step 2/4. Catalyzes the isomerization between 2-isopropylmalate and 3-isopropylmalate, via the formation of 2-isopropylmaleate. The sequence is that of 3-isopropylmalate dehydratase large subunit from Halalkalibacterium halodurans (strain ATCC BAA-125 / DSM 18197 / FERM 7344 / JCM 9153 / C-125) (Bacillus halodurans).